The following is a 223-amino-acid chain: UPF0758 protein Cvib_1178 (223 aa).

Residues 100-222 (KIQGARDVYE…WYSFRENNQL (123 aa)) form the MPN domain. 3 residues coordinate Zn(2+): His-171, His-173, and Asp-184. The short motif at 171–184 (HNHPSGDTEPSNAD) is the JAMM motif element.

It belongs to the UPF0758 family.

The protein is UPF0758 protein Cvib_1178 of Chlorobium phaeovibrioides (strain DSM 265 / 1930) (Prosthecochloris vibrioformis (strain DSM 265)).